The primary structure comprises 645 residues: Glucans biosynthesis glucosyltransferase H (645 aa).

The segment at 1–28 (MDGTVTLSPAPTDLPPVSSLDAGQPTLP) is disordered. 7 helical membrane-spanning segments follow: residues 64-84 (LIGG…SVLW), 98-118 (LFVL…AGFI), 423-443 (APMW…GAGI), 465-485 (AIWI…LGYI), 504-524 (ALSI…VMYL), 558-578 (SYGG…LVSP), and 580-600 (LAAW…VVAV).

The protein belongs to the glycosyltransferase 2 family. OpgH subfamily.

Its subcellular location is the cell inner membrane. It participates in glycan metabolism; osmoregulated periplasmic glucan (OPG) biosynthesis. In terms of biological role, involved in the biosynthesis of osmoregulated periplasmic glucans (OPGs). In Xanthomonas campestris pv. campestris (strain B100), this protein is Glucans biosynthesis glucosyltransferase H.